Reading from the N-terminus, the 89-residue chain is Cell division protein FtsL (89 aa).

Topologically, residues 1-22 (MIDRKHYHLVGSIGKDILNNGK) are cytoplasmic. The helical transmembrane segment at 23 to 40 (LPALLLIAVLASSSLVVI) threads the bilayer. Residues 41-89 (TTYQTRRLTVEREQLLLEQNILDIEWRNLILEDNVISDQSRFEFVATEQ) lie on the Periplasmic side of the membrane.

The protein belongs to the FtsL family. In terms of assembly, part of a complex composed of FtsB, FtsL and FtsQ.

It is found in the cell inner membrane. Functionally, essential cell division protein. May link together the upstream cell division proteins, which are predominantly cytoplasmic, with the downstream cell division proteins, which are predominantly periplasmic. In Moranella endobia (strain PCIT), this protein is Cell division protein FtsL.